Here is a 615-residue protein sequence, read N- to C-terminus: Dihydroxy-acid dehydratase (615 aa).

Aspartate 85 contributes to the Mg(2+) binding site. Residue cysteine 126 participates in [2Fe-2S] cluster binding. Mg(2+) contacts are provided by aspartate 127 and lysine 128. Lysine 128 carries the post-translational modification N6-carboxylysine. [2Fe-2S] cluster is bound at residue cysteine 199. Glutamate 495 lines the Mg(2+) pocket. Residue serine 521 is the Proton acceptor of the active site.

The protein belongs to the IlvD/Edd family. As to quaternary structure, homodimer. Requires [2Fe-2S] cluster as cofactor. Mg(2+) serves as cofactor.

It catalyses the reaction (2R)-2,3-dihydroxy-3-methylbutanoate = 3-methyl-2-oxobutanoate + H2O. The catalysed reaction is (2R,3R)-2,3-dihydroxy-3-methylpentanoate = (S)-3-methyl-2-oxopentanoate + H2O. It participates in amino-acid biosynthesis; L-isoleucine biosynthesis; L-isoleucine from 2-oxobutanoate: step 3/4. The protein operates within amino-acid biosynthesis; L-valine biosynthesis; L-valine from pyruvate: step 3/4. In terms of biological role, functions in the biosynthesis of branched-chain amino acids. Catalyzes the dehydration of (2R,3R)-2,3-dihydroxy-3-methylpentanoate (2,3-dihydroxy-3-methylvalerate) into 2-oxo-3-methylpentanoate (2-oxo-3-methylvalerate) and of (2R)-2,3-dihydroxy-3-methylbutanoate (2,3-dihydroxyisovalerate) into 2-oxo-3-methylbutanoate (2-oxoisovalerate), the penultimate precursor to L-isoleucine and L-valine, respectively. The polypeptide is Dihydroxy-acid dehydratase (Mannheimia succiniciproducens (strain KCTC 0769BP / MBEL55E)).